Consider the following 247-residue polypeptide: MHTKDQIFAAPIARLGDFCFDEQVVDVFPDMIQRSVPGYSNIISAIGMMAARYAQPQSRLYDLGCSLGAATQAMRRHLTQPGCHITAVDLSHPMIERARAHLSGFKSEVPVALVEADICDIAIENASVVVLNFTLQFVDPEKRMALIQRIFDGLRPGGILILSEKFRFEDEPVNDLLIELHLDFKRANGYSELEISQKRNALENVMRTDSLETHRSRLQSAGFVHQDLWFQCFNFGSMIAIKSSDAN.

S-adenosyl-L-methionine contacts are provided by residues Tyr39, 64-66 (GCS), 117-118 (DI), Asn132, and Arg199.

This sequence belongs to the class I-like SAM-binding methyltransferase superfamily. Cx-SAM synthase family. In terms of assembly, homodimer.

It catalyses the reaction prephenate + S-adenosyl-L-methionine = carboxy-S-adenosyl-L-methionine + 3-phenylpyruvate + H2O. Its function is as follows. Catalyzes the conversion of S-adenosyl-L-methionine (SAM) to carboxy-S-adenosyl-L-methionine (Cx-SAM). The polypeptide is Carboxy-S-adenosyl-L-methionine synthase (Aeromonas salmonicida (strain A449)).